The primary structure comprises 135 residues: Large ribosomal subunit protein eL32 (135 aa).

Residues 51 to 77 (GRDNKFRLKMKGKPRPPEPGYRSPRKV) are disordered.

It belongs to the eukaryotic ribosomal protein eL32 family.

This chain is Large ribosomal subunit protein eL32 (rpl32e), found in Nanoarchaeum equitans (strain Kin4-M).